The sequence spans 604 residues: Glutamine--fructose-6-phosphate aminotransferase [isomerizing] (604 aa).

Cys-2 (nucleophile; for GATase activity) is an active-site residue. One can recognise a Glutamine amidotransferase type-2 domain in the interval 2–218 (CGIVGVVGNT…DKELVIVKKD (217 aa)). 2 SIS domains span residues 284-423 (IIKS…ANGK) and 456-594 (VEQL…VDKP). The active-site For Fru-6P isomerization activity is Lys-599.

Homodimer.

Its subcellular location is the cytoplasm. It carries out the reaction D-fructose 6-phosphate + L-glutamine = D-glucosamine 6-phosphate + L-glutamate. Functionally, catalyzes the first step in hexosamine metabolism, converting fructose-6P into glucosamine-6P using glutamine as a nitrogen source. The protein is Glutamine--fructose-6-phosphate aminotransferase [isomerizing] of Streptococcus agalactiae serotype V (strain ATCC BAA-611 / 2603 V/R).